We begin with the raw amino-acid sequence, 121 residues long: ATP synthase epsilon chain (121 aa).

The protein belongs to the ATPase epsilon chain family. In terms of assembly, F-type ATPases have 2 components, CF(1) - the catalytic core - and CF(0) - the membrane proton channel. CF(1) has five subunits: alpha(3), beta(3), gamma(1), delta(1), epsilon(1). CF(0) has three main subunits: a, b and c.

The protein localises to the cell membrane. In terms of biological role, produces ATP from ADP in the presence of a proton gradient across the membrane. The sequence is that of ATP synthase epsilon chain from Mycolicibacterium smegmatis (strain ATCC 700084 / mc(2)155) (Mycobacterium smegmatis).